The chain runs to 116 residues: Dynein light chain Tctex-type 3 (116 aa).

Tyr-4 is subject to 3'-nitrotyrosine.

This sequence belongs to the dynein light chain Tctex-type family. In terms of assembly, homodimer. The cytoplasmic dynein 1 complex consists of two catalytic heavy chains (HCs) and a number of non-catalytic subunits presented by intermediate chains (ICs), light intermediate chains (LICs) and light chains (LCs); the composition seems to vary in respect to the IC, LIC and LC composition. The heavy chain homodimer serves as a scaffold for the probable homodimeric assembly of the respective non-catalytic subunits. The ICs and LICs bind directly to the HC dimer and the LCs assemble on the IC dimer. DYNLT1 and DYNLT3 compete for association with dynein IC (DYNC1I1 or DYNC1I2). Self-associates. Interacts with DYNC1I1 and DYNC1I2. Interacts with BUB3. Interacts with SATB1 in nucleus to form complex with matrix attachment regions (MARs) of DNA.

It localises to the nucleus. The protein resides in the cytoplasm. The protein localises to the cytoskeleton. Its subcellular location is the chromosome. It is found in the centromere. It localises to the kinetochore. In terms of biological role, acts as one of several non-catalytic accessory components of the cytoplasmic dynein 1 complex that are thought to be involved in linking dynein to cargos and to adapter proteins that regulate dynein function. Cytoplasmic dynein 1 acts as a motor for the intracellular retrograde motility of vesicles and organelles along microtubules. Probably binds BUB3 as part of transport cargo. Required for the efficient progression through mitosis. The polypeptide is Dynein light chain Tctex-type 3 (Dynlt3) (Mus musculus (Mouse)).